The sequence spans 549 residues: Cytoplasmic trehalase (549 aa).

Residues Arg168, 175 to 176, Asn212, 221 to 223, 292 to 294, and Gly324 each bind substrate; these read WD, RSQ, and RDE. Residues Asp326 and Glu509 each act as proton donor/acceptor in the active site. Substrate is bound at residue Glu525.

It belongs to the glycosyl hydrolase 37 family. As to quaternary structure, monomer.

It is found in the cytoplasm. The catalysed reaction is alpha,alpha-trehalose + H2O = alpha-D-glucose + beta-D-glucose. It participates in glycan degradation; trehalose degradation; D-glucose from alpha,alpha-trehalose: step 1/1. Hydrolyzes trehalose to glucose. Could be involved, in cells returning to low osmolarity conditions, in the utilization of the accumulated cytoplasmic trehalose, which was synthesized in response to high osmolarity. The protein is Cytoplasmic trehalase of Escherichia coli O81 (strain ED1a).